A 224-amino-acid polypeptide reads, in one-letter code: Ribosomal RNA small subunit methyltransferase G (224 aa).

Residues glycine 89, leucine 94, 140 to 141 (IE), and arginine 154 each bind S-adenosyl-L-methionine.

Belongs to the methyltransferase superfamily. RNA methyltransferase RsmG family.

The protein resides in the cytoplasm. It catalyses the reaction guanosine(527) in 16S rRNA + S-adenosyl-L-methionine = N(7)-methylguanosine(527) in 16S rRNA + S-adenosyl-L-homocysteine. Specifically methylates the N7 position of guanine in position 527 of 16S rRNA. The sequence is that of Ribosomal RNA small subunit methyltransferase G from Bordetella avium (strain 197N).